We begin with the raw amino-acid sequence, 240 residues long: ATP-dependent dethiobiotin synthetase BioD (240 aa).

ATP is bound at residue 15-20 (EIGKTF). Thr-19 serves as a coordination point for Mg(2+). The active site involves Lys-40. Residues Asp-57, 118-121 (EGVG), and 178-179 (NR) each bind ATP. Asp-57 and Glu-118 together coordinate Mg(2+).

This sequence belongs to the dethiobiotin synthetase family. In terms of assembly, homodimer. Requires Mg(2+) as cofactor.

It is found in the cytoplasm. The catalysed reaction is (7R,8S)-7,8-diammoniononanoate + CO2 + ATP = (4R,5S)-dethiobiotin + ADP + phosphate + 3 H(+). It participates in cofactor biosynthesis; biotin biosynthesis; biotin from 7,8-diaminononanoate: step 1/2. Catalyzes a mechanistically unusual reaction, the ATP-dependent insertion of CO2 between the N7 and N8 nitrogen atoms of 7,8-diaminopelargonic acid (DAPA, also called 7,8-diammoniononanoate) to form a ureido ring. This chain is ATP-dependent dethiobiotin synthetase BioD, found in Burkholderia pseudomallei (strain 1106a).